We begin with the raw amino-acid sequence, 456 residues long: tRNA modification GTPase MnmE (456 aa).

3 residues coordinate (6S)-5-formyl-5,6,7,8-tetrahydrofolate: Arg24, Glu81, and Lys120. Residues 216–379 form the TrmE-type G domain; that stretch reads GMTVVIAGRP…LRDHLKACMG (164 aa). Asn226 contacts K(+). Residues 226-231, 245-251, 270-273, 335-338, and 359-361 contribute to the GTP site; these read NAGKSS, TDIAGTT, DTAG, NKAD, and SAR. Ser230 lines the Mg(2+) pocket. Thr245, Ile247, and Thr250 together coordinate K(+). Thr251 contributes to the Mg(2+) binding site. Lys456 contributes to the (6S)-5-formyl-5,6,7,8-tetrahydrofolate binding site.

The protein belongs to the TRAFAC class TrmE-Era-EngA-EngB-Septin-like GTPase superfamily. TrmE GTPase family. As to quaternary structure, homodimer. Heterotetramer of two MnmE and two MnmG subunits. K(+) serves as cofactor.

The protein resides in the cytoplasm. Exhibits a very high intrinsic GTPase hydrolysis rate. Involved in the addition of a carboxymethylaminomethyl (cmnm) group at the wobble position (U34) of certain tRNAs, forming tRNA-cmnm(5)s(2)U34. In Pseudomonas entomophila (strain L48), this protein is tRNA modification GTPase MnmE.